Consider the following 152-residue polypeptide: SsrA-binding protein (152 aa).

It belongs to the SmpB family.

It is found in the cytoplasm. In terms of biological role, required for rescue of stalled ribosomes mediated by trans-translation. Binds to transfer-messenger RNA (tmRNA), required for stable association of tmRNA with ribosomes. tmRNA and SmpB together mimic tRNA shape, replacing the anticodon stem-loop with SmpB. tmRNA is encoded by the ssrA gene; the 2 termini fold to resemble tRNA(Ala) and it encodes a 'tag peptide', a short internal open reading frame. During trans-translation Ala-aminoacylated tmRNA acts like a tRNA, entering the A-site of stalled ribosomes, displacing the stalled mRNA. The ribosome then switches to translate the ORF on the tmRNA; the nascent peptide is terminated with the 'tag peptide' encoded by the tmRNA and targeted for degradation. The ribosome is freed to recommence translation, which seems to be the essential function of trans-translation. The polypeptide is SsrA-binding protein (Rickettsia felis (strain ATCC VR-1525 / URRWXCal2) (Rickettsia azadi)).